A 477-amino-acid polypeptide reads, in one-letter code: Myc-associated zinc finger protein (477 aa).

Disordered regions lie at residues 59-78 (AQSPFQAAPAPPPTPQAPAA) and 121-146 (TVDTAALKQPPAPPPPPPPVSAPAAE). Residues 130 to 141 (PPAPPPPPPPVS) show a composition bias toward pro residues. 4 consecutive C2H2-type zinc fingers follow at residues 190–212 (YICALCAKEFKNGYNLRRHEAIH), 279–301 (HACEMCGKAFRDVYHLNRHKLSH), 307–329 (YQCPVCQQRFKRKDRMSYHVRSH), and 337–360 (YNCSHCGKSFSRPDHLNSHVRQVH). At serine 361 the chain carries Phosphoserine. The C2H2-type 5 zinc finger occupies 366 to 388 (FKCEKCEAAFATKDRLRAHTVRH). The C2H2-type 6; atypical zinc-finger motif lies at 392 to 413 (VPCHVCGKMLSSAYISDHMKVH).

As to quaternary structure, interacts with BPTF. Forms a heterodimer with MAZ isoform 2; the interaction inhibits MAZ isoform 1-mediated transcription activation. In terms of assembly, forms a heterodimer with MAZ isoform 1; the interaction inhibits MAZ isoform 1-mediated transcription activation. Present in kidney, liver and brain. In the brain, highest levels are found in motor cortex and midfrontal cortex (at protein level). As to expression, expressed in the heart, brain, placenta, lung, liver, skeletal muscle and weakly expressed in the kidney. Expressed in the joint synovium.

The protein resides in the nucleus. Its function is as follows. Transcriptional regulator, potentially with dual roles in transcription initiation and termination. Functionally, binds DNA and functions as a transcriptional activator. Binds to two G/A-rich sites, ME1a1 and ME1a2, within the MYC promoter having greater affinity for the former. Also binds to multiple G/C-rich sites within the promoter of the Sp1 family of transcription factors. Binds DNA and functions as a transcriptional activator. Inhibits MAZ isoform 1-mediated transcription. In terms of biological role, binds DNA and functions as a transcriptional activator. The sequence is that of Myc-associated zinc finger protein (MAZ) from Homo sapiens (Human).